The chain runs to 330 residues: Cytoplasmic envelopment protein 2 (330 aa).

The protein belongs to the herpesviridae cytoplasmic envelopment protein 2 family. As to quaternary structure, interacts with cytoplasmic envelopment protein 3 and with the capsid.

It is found in the virion tegument. The protein resides in the host cytoplasm. The protein localises to the host nucleus. Its function is as follows. Plays a critical role in cytoplasmic virus egress. Participates in the final step of tegumentation and envelope acquisition within the host cytoplasm by directly interacting with the capsid. Upon virion binding to target cell, a signaling cascade is triggered to disrupt the interaction with the capsid, thereby preparing capsid uncoating. The polypeptide is Cytoplasmic envelopment protein 2 (33) (Saimiriine herpesvirus 2 (strain 11) (SaHV-2)).